The following is a 171-amino-acid chain: 3-hydroxydecanoyl-[acyl-carrier-protein] dehydratase (171 aa).

The active site involves His70.

This sequence belongs to the thioester dehydratase family. FabA subfamily. In terms of assembly, homodimer.

It localises to the cytoplasm. It catalyses the reaction a (3R)-hydroxyacyl-[ACP] = a (2E)-enoyl-[ACP] + H2O. It carries out the reaction (3R)-hydroxydecanoyl-[ACP] = (2E)-decenoyl-[ACP] + H2O. The enzyme catalyses (2E)-decenoyl-[ACP] = (3Z)-decenoyl-[ACP]. The protein operates within lipid metabolism; fatty acid biosynthesis. In terms of biological role, necessary for the introduction of cis unsaturation into fatty acids. Catalyzes the dehydration of (3R)-3-hydroxydecanoyl-ACP to E-(2)-decenoyl-ACP and then its isomerization to Z-(3)-decenoyl-ACP. Can catalyze the dehydratase reaction for beta-hydroxyacyl-ACPs with saturated chain lengths up to 16:0, being most active on intermediate chain length. In Shewanella frigidimarina (strain NCIMB 400), this protein is 3-hydroxydecanoyl-[acyl-carrier-protein] dehydratase.